The primary structure comprises 139 residues: S-adenosylmethionine decarboxylase proenzyme (139 aa).

The Schiff-base intermediate with substrate; via pyruvic acid role is filled by Ser63. The residue at position 63 (Ser63) is a Pyruvic acid (Ser); by autocatalysis. The active-site Proton acceptor; for processing activity is the His68. The active-site Proton donor; for catalytic activity is Cys83.

The protein belongs to the prokaryotic AdoMetDC family. Type 1 subfamily. Heterotetramer of two alpha and two beta chains arranged as a dimer of alpha/beta heterodimers. Requires pyruvate as cofactor. In terms of processing, is synthesized initially as an inactive proenzyme. Formation of the active enzyme involves a self-maturation process in which the active site pyruvoyl group is generated from an internal serine residue via an autocatalytic post-translational modification. Two non-identical subunits are generated from the proenzyme in this reaction, and the pyruvate is formed at the N-terminus of the alpha chain, which is derived from the carboxyl end of the proenzyme. The post-translation cleavage follows an unusual pathway, termed non-hydrolytic serinolysis, in which the side chain hydroxyl group of the serine supplies its oxygen atom to form the C-terminus of the beta chain, while the remainder of the serine residue undergoes an oxidative deamination to produce ammonia and the pyruvoyl group blocking the N-terminus of the alpha chain.

The catalysed reaction is S-adenosyl-L-methionine + H(+) = S-adenosyl 3-(methylsulfanyl)propylamine + CO2. The protein operates within amine and polyamine biosynthesis; S-adenosylmethioninamine biosynthesis; S-adenosylmethioninamine from S-adenosyl-L-methionine: step 1/1. Functionally, catalyzes the decarboxylation of S-adenosylmethionine to S-adenosylmethioninamine (dcAdoMet), the propylamine donor required for the synthesis of the polyamines spermine and spermidine from the diamine putrescine. This Pyrococcus horikoshii (strain ATCC 700860 / DSM 12428 / JCM 9974 / NBRC 100139 / OT-3) protein is S-adenosylmethionine decarboxylase proenzyme.